The chain runs to 332 residues: Holliday junction branch migration complex subunit RuvB (332 aa).

The segment at 1-182 is large ATPase domain (RuvB-L); that stretch reads MKLNKNSELK…FGLILKLNYY (182 aa). ATP-binding positions include Leu21, Arg22, Gly63, Lys66, Thr67, Thr68, 129–131, Arg172, Tyr182, and Arg219; that span reads EDY. Residue Thr67 coordinates Mg(2+). Residues 183–253 are small ATPAse domain (RuvB-S); it reads SEDELELIIK…ISEIALEKLT (71 aa). Positions 256–332 are head domain (RuvB-H); sequence KNGLDDADYT…FKLFKNDKIK (77 aa). Arg311 and Arg316 together coordinate DNA.

The protein belongs to the RuvB family. As to quaternary structure, homohexamer. Forms an RuvA(8)-RuvB(12)-Holliday junction (HJ) complex. HJ DNA is sandwiched between 2 RuvA tetramers; dsDNA enters through RuvA and exits via RuvB. An RuvB hexamer assembles on each DNA strand where it exits the tetramer. Each RuvB hexamer is contacted by two RuvA subunits (via domain III) on 2 adjacent RuvB subunits; this complex drives branch migration. In the full resolvosome a probable DNA-RuvA(4)-RuvB(12)-RuvC(2) complex forms which resolves the HJ.

The protein localises to the cytoplasm. The catalysed reaction is ATP + H2O = ADP + phosphate + H(+). In terms of biological role, the RuvA-RuvB-RuvC complex processes Holliday junction (HJ) DNA during genetic recombination and DNA repair, while the RuvA-RuvB complex plays an important role in the rescue of blocked DNA replication forks via replication fork reversal (RFR). RuvA specifically binds to HJ cruciform DNA, conferring on it an open structure. The RuvB hexamer acts as an ATP-dependent pump, pulling dsDNA into and through the RuvAB complex. RuvB forms 2 homohexamers on either side of HJ DNA bound by 1 or 2 RuvA tetramers; 4 subunits per hexamer contact DNA at a time. Coordinated motions by a converter formed by DNA-disengaged RuvB subunits stimulates ATP hydrolysis and nucleotide exchange. Immobilization of the converter enables RuvB to convert the ATP-contained energy into a lever motion, pulling 2 nucleotides of DNA out of the RuvA tetramer per ATP hydrolyzed, thus driving DNA branch migration. The RuvB motors rotate together with the DNA substrate, which together with the progressing nucleotide cycle form the mechanistic basis for DNA recombination by continuous HJ branch migration. Branch migration allows RuvC to scan DNA until it finds its consensus sequence, where it cleaves and resolves cruciform DNA. This is Holliday junction branch migration complex subunit RuvB from Phytoplasma mali (strain AT).